Here is a 299-residue protein sequence, read N- to C-terminus: Sulfate adenylyltransferase subunit 2 (299 aa).

This sequence belongs to the PAPS reductase family. CysD subfamily. Sulfate-activating enzymes, NodP and NodQ, may be physically associated.

It carries out the reaction sulfate + ATP + H(+) = adenosine 5'-phosphosulfate + diphosphate. Its function is as follows. Proposed to provide activated sulfate for transfer to nod factor. The chain is Sulfate adenylyltransferase subunit 2 (nodP) from Rhizobium tropici.